A 64-amino-acid chain; its full sequence is Large ribosomal subunit protein bL35 (64 aa).

The tract at residues 22 to 44 (IMKQQAGMRHNLEVKSSKRKARL) is disordered.

The protein belongs to the bacterial ribosomal protein bL35 family.

The polypeptide is Large ribosomal subunit protein bL35 (Clavibacter sepedonicus (Clavibacter michiganensis subsp. sepedonicus)).